A 362-amino-acid chain; its full sequence is Mortality factor 4-like protein 1 (362 aa).

In terms of domain architecture, Tudor-knot spans 12-51 (QEGERVLCFHGPLLYEAKCVKVAIKDKQVKYFIHYSGWNK). Residues 26–62 (YEAKCVKVAIKDKQVKYFIHYSGWNKKSAVRPRRSEK) are interaction with KAT8. Residues 113-182 (RELQKANQEQ…RKKRARVDPT (70 aa)) are disordered. Residues 133–266 (PGKKTSGLQQ…VAGIKEYFNV (134 aa)) form a sufficient for interaction with SIN3A region. Positions 135–146 (KKTSGLQQKNVE) match the Nuclear localization signal motif. Lys-143 carries the N6-acetyllysine modification. Residues 164–230 (STSETPQPPR…FYLPAKKNVD (67 aa)) are interaction with RB1-1. Residues 188 to 342 (TFMNRVEVKV…FLKYLAKNSA (155 aa)) are sufficient for interaction with PHF12. The MRG domain occupies 191-362 (NRVEVKVKIP…APPEYHRKAV (172 aa)). The segment at 323–344 (LALLLNYLHDFLKYLAKNSATL) is interaction with RB1-2.

As to quaternary structure, component of the NuA4 histone acetyltransferase complex which contains the catalytic subunit KAT5/TIP60 and the subunits EP400, TRRAP/PAF400, BRD8/SMAP, EPC1, DMAP1/DNMAP1, RUVBL1/TIP49, RUVBL2, ING3, actin, ACTL6A/BAF53A, MORF4L1/MRG15, MORF4L2/MRGX, MRGBP, YEATS4/GAS41, VPS72/YL1 and MEAF6. The NuA4 complex interacts with MYC and the adenovirus E1A protein. MORF4L1 may also participate in the formation of NuA4 related complexes which lack the KAT5/TIP60 catalytic subunit, but which include the SWI/SNF related protein SRCAP. Component of the mSin3A histone deacetylase complex, which includes SIN3A, HDAC2, ARID4B, MORF4L1, RBBP4/RbAp48, and RBBP7/RbAp46. May also interact with PHF12 and one or more as yet undefined members of the TLE (transducin-like enhancer of split) family of transcriptional repressors. Component of the SIN3B complex, which includes SIN3B, HDAC2 or HDAC1, PHF12 and MORF4L1. Interacts with RB1 and KAT8. Interacts with the N-terminus of MRFAP1. Found in a complex composed of MORF4L1, MRFAP1 and RB1. Interacts with the entire BRCA complex, which contains BRCA1, PALB2, BRCA2 and RAD51. Interacts with PALB2. Forms a complex with MSL1 and NUPR1.

The protein localises to the nucleus. In terms of biological role, component of the NuA4 histone acetyltransferase (HAT) complex which is involved in transcriptional activation of select genes principally by acetylation of nucleosomal histones H4 and H2A. This modification may both alter nucleosome - DNA interactions and promote interaction of the modified histones with other proteins which positively regulate transcription. This complex may be required for the activation of transcriptional programs associated with oncogene and proto-oncogene mediated growth induction, tumor suppressor mediated growth arrest and replicative senescence, apoptosis, and DNA repair. The NuA4 complex ATPase and helicase activities seem to be, at least in part, contributed by the association of RUVBL1 and RUVBL2 with EP400. NuA4 may also play a direct role in DNA repair when directly recruited to sites of DNA damage. As part of the SIN3B complex represses transcription and counteracts the histone acetyltransferase activity of EP300 through the recognition H3K27ac marks by PHF12 and the activity of the histone deacetylase HDAC2. SIN3B complex is recruited downstream of the constitutively active genes transcriptional start sites through interaction with histones and mitigates histone acetylation and RNA polymerase II progression within transcribed regions contributing to the regulation of transcription. Required for homologous recombination repair (HRR) and resistance to mitomycin C (MMC). Involved in the localization of PALB2, BRCA2 and RAD51, but not BRCA1, to DNA-damage foci. This chain is Mortality factor 4-like protein 1 (Morf4l1), found in Mus musculus (Mouse).